The chain runs to 258 residues: Type III pantothenate kinase (258 aa).

Residue D6–V13 coordinates ATP. Substrate-binding positions include Y100 and G107–R110. D109 acts as the Proton acceptor in catalysis. D129 provides a ligand contact to K(+). ATP is bound at residue T132. T184 is a substrate binding site.

This sequence belongs to the type III pantothenate kinase family. In terms of assembly, homodimer. Requires NH4(+) as cofactor. It depends on K(+) as a cofactor.

It localises to the cytoplasm. The enzyme catalyses (R)-pantothenate + ATP = (R)-4'-phosphopantothenate + ADP + H(+). Its pathway is cofactor biosynthesis; coenzyme A biosynthesis; CoA from (R)-pantothenate: step 1/5. Its activity is regulated as follows. Not regulated by feedback inhibition by CoA and its thioesters as described for many other pantothenate kinases. Not inhibited by N-pentylpantothenamide (N5-Pan), and this compound cannot act as a substrate either. In terms of biological role, catalyzes the phosphorylation of pantothenate (Pan), the first step in CoA biosynthesis. Cannot utilize a phosphoryl donor other than ATP. This chain is Type III pantothenate kinase (coaX), found in Bacillus subtilis (strain 168).